The chain runs to 273 residues: Hydroxyethylthiazole kinase (273 aa).

Met47 lines the substrate pocket. ATP-binding residues include Arg123 and Thr172. Position 199 (Gly199) interacts with substrate.

Belongs to the Thz kinase family. Requires Mg(2+) as cofactor.

It catalyses the reaction 5-(2-hydroxyethyl)-4-methylthiazole + ATP = 4-methyl-5-(2-phosphooxyethyl)-thiazole + ADP + H(+). It participates in cofactor biosynthesis; thiamine diphosphate biosynthesis; 4-methyl-5-(2-phosphoethyl)-thiazole from 5-(2-hydroxyethyl)-4-methylthiazole: step 1/1. Its function is as follows. Catalyzes the phosphorylation of the hydroxyl group of 4-methyl-5-beta-hydroxyethylthiazole (THZ). The chain is Hydroxyethylthiazole kinase from Ruminiclostridium cellulolyticum (strain ATCC 35319 / DSM 5812 / JCM 6584 / H10) (Clostridium cellulolyticum).